The chain runs to 86 residues: MRLFLSLPVLVVVLLMILEGPGPAQGAPEALDTSSGLDKLKEFGNTLEDKVREFFNRVKESDIPAKTRNWFSETLQKVKEKLRIES.

Residues 1–26 (MRLFLSLPVLVVVLLMILEGPGPAQG) form the signal peptide.

Belongs to the apolipoprotein C1 family.

The protein localises to the secreted. In terms of biological role, inhibitor of lipoprotein binding to the low density lipoprotein (LDL) receptor, LDL receptor-related protein, and very low density lipoprotein (VLDL) receptor. Associates with high density lipoproteins (HDL) and the triacylglycerol-rich lipoproteins in the plasma and makes up about 10% of the protein of the VLDL and 2% of that of HDL. Appears to interfere directly with fatty acid uptake and is also the major plasma inhibitor of cholesteryl ester transfer protein (CETP). Binds free fatty acids and reduces their intracellular esterification. Modulates the interaction of APOE with beta-migrating VLDL and inhibits binding of beta-VLDL to the LDL receptor-related protein. The protein is Apolipoprotein C-I (APOC1) of Ateles geoffroyi (Black-handed spider monkey).